The chain runs to 507 residues: Serine hydroxymethyltransferase (507 aa).

Residue Lys-283 is modified to N6-(pyridoxal phosphate)lysine.

It belongs to the SHMT family. Homotetramer. Pyridoxal 5'-phosphate is required as a cofactor.

It carries out the reaction (6R)-5,10-methylene-5,6,7,8-tetrahydrofolate + glycine + H2O = (6S)-5,6,7,8-tetrahydrofolate + L-serine. The protein operates within one-carbon metabolism; tetrahydrofolate interconversion. Functionally, interconversion of serine and glycine. The protein is Serine hydroxymethyltransferase (mel-32) of Caenorhabditis elegans.